We begin with the raw amino-acid sequence, 360 residues long: Protein Wnt-2 (360 aa).

A signal peptide spans 1 to 25 (MNAPLCGIWLWLPLLLTWLTPEVSS). Cystine bridges form between cysteine 76–cysteine 87, cysteine 127–cysteine 135, cysteine 137–cysteine 157, cysteine 206–cysteine 220, cysteine 208–cysteine 215, cysteine 278–cysteine 309, cysteine 294–cysteine 304, cysteine 308–cysteine 348, cysteine 324–cysteine 339, cysteine 326–cysteine 336, and cysteine 331–cysteine 332. A lipid anchor (O-palmitoleoyl serine; by PORCN) is attached at serine 212. The N-linked (GlcNAc...) asparagine glycan is linked to asparagine 295.

Belongs to the Wnt family. Post-translationally, palmitoleoylation is required for efficient binding to frizzled receptors. Depalmitoleoylation leads to Wnt signaling pathway inhibition.

It is found in the secreted. The protein localises to the extracellular space. It localises to the extracellular matrix. Its function is as follows. Ligand for members of the frizzled family of seven transmembrane receptors. Functions in the canonical Wnt signaling pathway that results in activation of transcription factors of the TCF/LEF family. Functions as a upstream regulator of FGF10 expression. Plays an important role in embryonic lung development. May contribute to embryonic brain development by regulating the proliferation of dopaminergic precursors and neurons. In Otolemur garnettii (Small-eared galago), this protein is Protein Wnt-2 (WNT2).